Reading from the N-terminus, the 353-residue chain is Photosystem II D2 protein (353 aa).

Residue Thr2 is modified to N-acetylthreonine. Position 2 is a phosphothreonine (Thr2). Residues 41-61 (CAYFALGGWFTGTTFVTSWYT) traverse the membrane as a helical segment. Residue His118 coordinates chlorophyll a. A helical membrane pass occupies residues 125 to 141 (GFMLRQFELARSVQLRP). 2 residues coordinate pheophytin a: Gln130 and Asn143. A helical membrane pass occupies residues 153 to 166 (VFVSVFLIYPLGQS). Residue His198 participates in chlorophyll a binding. Residues 208 to 228 (AALLCAIHGATVENTLFEDGD) traverse the membrane as a helical segment. A plastoquinone-binding residues include His215 and Phe262. His215 lines the Fe cation pocket. His269 contacts Fe cation. The chain crosses the membrane as a helical span at residues 279–295 (GLWMSALGVVGLALNLR).

This sequence belongs to the reaction center PufL/M/PsbA/D family. PSII is composed of 1 copy each of membrane proteins PsbA, PsbB, PsbC, PsbD, PsbE, PsbF, PsbH, PsbI, PsbJ, PsbK, PsbL, PsbM, PsbT, PsbX, PsbY, PsbZ, Psb30/Ycf12, at least 3 peripheral proteins of the oxygen-evolving complex and a large number of cofactors. It forms dimeric complexes. The D1/D2 heterodimer binds P680, chlorophylls that are the primary electron donor of PSII, and subsequent electron acceptors. It shares a non-heme iron and each subunit binds pheophytin, quinone, additional chlorophylls, carotenoids and lipids. There is also a Cl(-1) ion associated with D1 and D2, which is required for oxygen evolution. The PSII complex binds additional chlorophylls, carotenoids and specific lipids. is required as a cofactor.

Its subcellular location is the plastid. It is found in the chloroplast thylakoid membrane. The catalysed reaction is 2 a plastoquinone + 4 hnu + 2 H2O = 2 a plastoquinol + O2. Its function is as follows. Photosystem II (PSII) is a light-driven water:plastoquinone oxidoreductase that uses light energy to abstract electrons from H(2)O, generating O(2) and a proton gradient subsequently used for ATP formation. It consists of a core antenna complex that captures photons, and an electron transfer chain that converts photonic excitation into a charge separation. The D1/D2 (PsbA/PsbD) reaction center heterodimer binds P680, the primary electron donor of PSII as well as several subsequent electron acceptors. D2 is needed for assembly of a stable PSII complex. The polypeptide is Photosystem II D2 protein (Populus trichocarpa (Western balsam poplar)).